The sequence spans 277 residues: Indole-3-glycerol phosphate synthase (277 aa).

It belongs to the TrpC family.

The enzyme catalyses 1-(2-carboxyphenylamino)-1-deoxy-D-ribulose 5-phosphate + H(+) = (1S,2R)-1-C-(indol-3-yl)glycerol 3-phosphate + CO2 + H2O. Its pathway is amino-acid biosynthesis; L-tryptophan biosynthesis; L-tryptophan from chorismate: step 4/5. The protein is Indole-3-glycerol phosphate synthase of Pseudomonas putida (strain ATCC 700007 / DSM 6899 / JCM 31910 / BCRC 17059 / LMG 24140 / F1).